Here is a 422-residue protein sequence, read N- to C-terminus: Keratin, type II cytoskeletal 80 (422 aa).

The segment at 1 to 82 (MACRSCVVGF…DPAIQQQKNN (82 aa)) is head. Serine 45 carries the phosphoserine modification. The coil 1A stretch occupies residues 83 to 118 (EKEEMKVLNDKFASLIGKVQALEQRNQLLETRWHFL). The region spanning 83 to 394 (EKEEMKVLND…KLMEGEESRM (312 aa)) is the IF rod domain. Residues 119–135 (QSQDSATFDLGHLYEEY) are linker 1. The interval 136–227 (QGRLQEELRK…SIYEQELKDL (92 aa)) is coil 1B. The tract at residues 228-251 (AAQLKDVSVTVGMDSRCHIDLSGI) is linker 12. The coil 2 stretch occupies residues 252–390 (VEEVKAQYDA…ATYRKLMEGE (139 aa)). A tail region spans residues 391–422 (ESRMDMPSATVVSAVQARCRTAPTLPHPLCSL).

This sequence belongs to the intermediate filament family. In terms of assembly, heterotetramer of two type I and two type II keratins.

The chain is Keratin, type II cytoskeletal 80 (KRT80) from Bos taurus (Bovine).